The primary structure comprises 122 residues: Large ribosomal subunit protein bL12 (122 aa).

It belongs to the bacterial ribosomal protein bL12 family. As to quaternary structure, homodimer. Part of the ribosomal stalk of the 50S ribosomal subunit. Forms a multimeric L10(L12)X complex, where L10 forms an elongated spine to which 2 to 4 L12 dimers bind in a sequential fashion. Binds GTP-bound translation factors.

Its function is as follows. Forms part of the ribosomal stalk which helps the ribosome interact with GTP-bound translation factors. Is thus essential for accurate translation. In Streptococcus mutans serotype c (strain ATCC 700610 / UA159), this protein is Large ribosomal subunit protein bL12.